We begin with the raw amino-acid sequence, 1286 residues long: Lysine-specific demethylase JMJ705 (1286 aa).

The 42-residue stretch at 25-66 (APEFRPTAAEFADPVSYILKIEPAAAPYGICKVVPPLPPPPK) folds into the JmjN domain. A disordered region spans residues 82–105 (PDDRSPSFPTRHQQVGLCPRRTRP). The 167-residue stretch at 201 to 367 (ETAWNMRGVA…IAKEAAIRRA (167 aa)) folds into the JmjC domain. Fe cation is bound by residues H244, E246, and H335. Over residues 641–679 (PNSSNNVGCVGTKLSSSSTERQERPSSQNAHCNGSSVIS) the composition is skewed to polar residues. Disordered stretches follow at residues 641-686 (PNSS…KGVR), 1013-1060 (AEPV…HSQE), and 1077-1164 (PAGT…PKQA). Residues 1119 to 1136 (HASGQKSNVQEANANSAS) are compositionally biased toward polar residues. Residues 1167–1189 (YSCDIEGCSMSFRTKRDLSLHKS) form a C2H2-type 1; degenerate zinc finger. 3 C2H2-type zinc fingers span residues 1190–1214 (DICP…RKVH), 1220–1244 (LTCP…LRVH), and 1250–1276 (YVCH…KTGH).

The cofactor is Fe(2+). In terms of tissue distribution, expressed in leaves and flag leaves. Expressed at low levels in roots, shoots, stems and panicles.

It localises to the nucleus. It catalyses the reaction N(6),N(6),N(6)-trimethyl-L-lysyl(27)-[histone H3] + 2 2-oxoglutarate + 2 O2 = N(6)-methyl-L-lysyl(27)-[histone H3] + 2 formaldehyde + 2 succinate + 2 CO2. In terms of biological role, histone demethylase that demethylates 'Lys-27' (H3K27me) of histone H3 with a specific activity for H3K27me3 and H3K27me2. No activity on H3K4me3, H3K9me3, H3K27me1 and H3K36me3. Involved in biotic stress response. May demethylate H3K27me3-marked defense-related genes and increase their basal and induced expression levels during pathogen infection. This Oryza sativa subsp. japonica (Rice) protein is Lysine-specific demethylase JMJ705 (JMJ705).